The sequence spans 414 residues: 3-oxoacyl-[acyl-carrier-protein] synthase 2 (414 aa).

The Ketosynthase family 3 (KS3) domain maps to 4–411 (NIRVVITGMG…GHNAVLVFKK (408 aa)). Residues cysteine 165, histidine 304, and histidine 341 each act as for beta-ketoacyl synthase activity in the active site.

This sequence belongs to the thiolase-like superfamily. Beta-ketoacyl-ACP synthases family.

It catalyses the reaction a fatty acyl-[ACP] + malonyl-[ACP] + H(+) = a 3-oxoacyl-[ACP] + holo-[ACP] + CO2. The catalysed reaction is (9Z)-hexadecenoyl-[ACP] + malonyl-[ACP] + H(+) = 3-oxo-(11Z)-octadecenoyl-[ACP] + holo-[ACP] + CO2. It participates in lipid metabolism; fatty acid biosynthesis. Its function is as follows. Involved in the type II fatty acid elongation cycle. Catalyzes the elongation of a wide range of acyl-ACP by the addition of two carbons from malonyl-ACP to an acyl acceptor. Can efficiently catalyze the conversion of palmitoleoyl-ACP (cis-hexadec-9-enoyl-ACP) to cis-vaccenoyl-ACP (cis-octadec-11-enoyl-ACP), an essential step in the thermal regulation of fatty acid composition. This chain is 3-oxoacyl-[acyl-carrier-protein] synthase 2 (fabF), found in Staphylococcus aureus (strain MRSA252).